Reading from the N-terminus, the 257-residue chain is Alcohol dehydrogenase 1 (257 aa).

Val9–Leu33 is a binding site for NAD(+). Ser137 contributes to the substrate binding site. Tyr150 functions as the Proton acceptor in the catalytic mechanism.

This sequence belongs to the short-chain dehydrogenases/reductases (SDR) family. Homodimer.

The enzyme catalyses a primary alcohol + NAD(+) = an aldehyde + NADH + H(+). It catalyses the reaction a secondary alcohol + NAD(+) = a ketone + NADH + H(+). This is Alcohol dehydrogenase 1 (ADH1) from Ceratitis cosyra (Mango fruit fly).